Here is a 138-residue protein sequence, read N- to C-terminus: Integration host factor subunit beta (138 aa).

Basic and acidic residues predominate over residues 81 to 98 (KAGKELRERVDRSLERQG). Residues 81-138 (KAGKELRERVDRSLERQGDSSSEGEPVSLTAVKAARQAGGHHAAGFPAEATPTLVMSR) form a disordered region.

The protein belongs to the bacterial histone-like protein family. Heterodimer of an alpha and a beta chain.

This protein is one of the two subunits of integration host factor, a specific DNA-binding protein that functions in genetic recombination as well as in transcriptional and translational control. This is Integration host factor subunit beta from Ralstonia nicotianae (strain ATCC BAA-1114 / GMI1000) (Ralstonia solanacearum).